A 234-amino-acid polypeptide reads, in one-letter code: Biotin transport ATP-binding protein BioM (234 aa).

The region spanning 1–230 (MQAIDIGHVT…YIAAMQALAR (230 aa)) is the ABC transporter domain. Residue 35-42 (GRNGAGKS) coordinates ATP.

This sequence belongs to the ABC transporter superfamily. As to quaternary structure, part of a biotin transporter holocomplex composed of BioM, BioN and BioY. BioMN complexes can be readily purified, but not BioMY complexes. Only the BioMNY complex has ATPase activity.

It localises to the cell inner membrane. Functionally, required for biotin uptake under very low (pM) biotin concentrations but not under higher (nM) concentrations. In Rhodobacter capsulatus (strain ATCC BAA-309 / NBRC 16581 / SB1003), this protein is Biotin transport ATP-binding protein BioM (bioM).